Consider the following 344-residue polypeptide: Eukaryotic translation initiation factor 2 subunit alpha (344 aa).

An S1 motif domain is found at 21-92; sequence DMAVMIQVKT…ERGYIDLSKR (72 aa). Phosphoserine; by GCN2 is present on serine 56. Residues 309 to 344 form a disordered region; sequence LRMDNEEMSGDEGSEDEEEDTGMGEVDIDGGSGIIE. A compositionally biased stretch (acidic residues) spans 314-336; sequence EEMSGDEGSEDEEEDTGMGEVDI. Serine 317 and serine 322 each carry phosphoserine; by CK2.

It belongs to the eIF-2-alpha family. As to quaternary structure, eukaryotic translation initiation factor 2 eIF2 is a heterotrimeric complex composed of an alpha, a beta and a gamma subunit. In terms of processing, phosphorylated at Ser-56 by GCN2. Phosphorylated at Ser-317 and Ser-322 by CK2.

It is found in the cytoplasm. Its subcellular location is the cytosol. In terms of biological role, functions in the early steps of protein synthesis by forming a ternary complex with GTP and initiator tRNA. This complex binds to a 40S ribosomal subunit, followed by mRNA binding to form a 43S pre-initiation complex. Junction of the 60S ribosomal subunit to form the 80S initiation complex is preceded by hydrolysis of the GTP bound to eIF-2 and release of an eIF-2-GDP binary complex. In order for eIF-2 to recycle and catalyze another round of initiation, the GDP bound to eIF-2 must exchange with GTP by way of a reaction catalyzed by eIF2B. This Arabidopsis thaliana (Mouse-ear cress) protein is Eukaryotic translation initiation factor 2 subunit alpha.